Consider the following 435-residue polypeptide: Methylenetetrahydrofolate--tRNA-(uracil-5-)-methyltransferase TrmFO (435 aa).

Position 9 to 14 (9 to 14 (GGGLAG)) interacts with FAD.

Belongs to the MnmG family. TrmFO subfamily. FAD serves as cofactor.

It localises to the cytoplasm. The enzyme catalyses uridine(54) in tRNA + (6R)-5,10-methylene-5,6,7,8-tetrahydrofolate + NADH + H(+) = 5-methyluridine(54) in tRNA + (6S)-5,6,7,8-tetrahydrofolate + NAD(+). It carries out the reaction uridine(54) in tRNA + (6R)-5,10-methylene-5,6,7,8-tetrahydrofolate + NADPH + H(+) = 5-methyluridine(54) in tRNA + (6S)-5,6,7,8-tetrahydrofolate + NADP(+). In terms of biological role, catalyzes the folate-dependent formation of 5-methyl-uridine at position 54 (M-5-U54) in all tRNAs. This chain is Methylenetetrahydrofolate--tRNA-(uracil-5-)-methyltransferase TrmFO, found in Geobacter sp. (strain M21).